The primary structure comprises 376 residues: N-acetyldiaminopimelate deacetylase (376 aa).

Residue D69 is part of the active site. Catalysis depends on E128, which acts as the Proton acceptor.

This sequence belongs to the peptidase M20A family. N-acetyldiaminopimelate deacetylase subfamily.

It carries out the reaction N-acetyl-(2S,6S)-2,6-diaminopimelate + H2O = (2S,6S)-2,6-diaminopimelate + acetate. Its pathway is amino-acid biosynthesis; L-lysine biosynthesis via DAP pathway; LL-2,6-diaminopimelate from (S)-tetrahydrodipicolinate (acetylase route): step 3/3. Its function is as follows. Catalyzes the conversion of N-acetyl-diaminopimelate to diaminopimelate and acetate. This chain is N-acetyldiaminopimelate deacetylase, found in Bacillus cereus (strain AH820).